The following is a 651-amino-acid chain: PTS system N-acetylglucosamine-specific EIICBA component (651 aa).

The 371-residue stretch at 1-371 (MNILGFFQRL…FNLKTPGRED (371 aa)) folds into the PTS EIIC type-1 domain. The next 12 membrane-spanning stretches (helical) occupy residues 16-36 (LPIAVLPVAALLLRFGQPDLL), 40-60 (FIAQAGGAIFDNLALIFAIGV), 70-90 (GSAALAGAVGYFVMTKAMVTI), 92-112 (PEINMGVLAGIITGLVAGAVY), 132-152 (FVPIATGFFCLILAAIFGYVW), 165-185 (WIVSAGALGSGIFGFINRLLI), 192-212 (VLNTIAWFQIGEFTNAAGTVF), 232-252 (GFFPIMMFGLPGAALAMYLAA), 264-284 (LLSVAITAFLTGVTEPLEFLF), 285-305 (LFLAPLLYLLHAVLTGISLFI), 308-328 (ALGIHAGFSFSAGAIDYVLMY), and 339-359 (MLLVMGVVFFFVYFLLFSAVI). One can recognise a PTS EIIB type-1 domain in the interval 390–472 (TQLATSYIAA…KKVVTRGPVA (83 aa)). The Phosphocysteine intermediate; for EIIB activity role is filled by Cys-412. Position 412 is a phosphocysteine; by EIIA (Cys-412). The 105-residue stretch at 519–623 (DEAFASKAVG…SMISPVVCSN (105 aa)) folds into the PTS EIIA type-1 domain. His-556 and His-571 together coordinate Zn(2+). His-571 functions as the Tele-phosphohistidine intermediate; for EIIA activity in the catalytic mechanism. A Phosphohistidine; by HPr modification is found at His-571.

It depends on Zn(2+) as a cofactor.

The protein localises to the cell inner membrane. The catalysed reaction is N(pros)-phospho-L-histidyl-[protein] + N-acetyl-D-glucosamine(out) = N-acetyl-D-glucosamine 6-phosphate(in) + L-histidyl-[protein]. Functionally, the phosphoenolpyruvate-dependent sugar phosphotransferase system (sugar PTS), a major carbohydrate active transport system, catalyzes the phosphorylation of incoming sugar substrates concomitantly with their translocation across the cell membrane. This system is involved in N-acetylglucosamine transport. The protein is PTS system N-acetylglucosamine-specific EIICBA component (nagE) of Klebsiella pneumoniae.